The chain runs to 330 residues: Daunorubicin/doxorubicin resistance ATP-binding protein DrrA (330 aa).

Positions 9 to 239 (IETSGLVKVY…LGSNVLRLRL (231 aa)) constitute an ABC transporter domain. Position 41–48 (41–48 (GPNGAGKS)) interacts with ATP.

The protein belongs to the ABC transporter superfamily. Drug exporter-1 (DrugE1) (TC 3.A.1.105) family. In terms of assembly, the complex is composed of two ATP-binding proteins (DrrA) and two transmembrane proteins (DrrB).

Its subcellular location is the cell membrane. It catalyses the reaction daunorubicin(in) + ATP + H2O = daunorubicin(out) + ADP + phosphate + H(+). Its function is as follows. Part of the ABC transporter complex DrrAB involved in daunorubicin and doxorubicin resistance. Responsible for energy coupling to the transport system. Binds ATP or GTP. The protein is Daunorubicin/doxorubicin resistance ATP-binding protein DrrA (drrA) of Streptomyces peucetius.